Here is a 522-residue protein sequence, read N- to C-terminus: Probable cytochrome P450 12e1, mitochondrial (522 aa).

Cys-468 is a heme binding site.

The protein belongs to the cytochrome P450 family. Heme is required as a cofactor.

It localises to the mitochondrion membrane. The sequence is that of Probable cytochrome P450 12e1, mitochondrial (Cyp12e1) from Drosophila melanogaster (Fruit fly).